The chain runs to 198 residues: Holliday junction branch migration complex subunit RuvA (198 aa).

Residues 1-63 (MYSYIIGVIT…EDASILYGFS (63 aa)) are domain I. Positions 64–142 (SQKERELFNL…KDFVPSEKPV (79 aa)) are domain II. The tract at residues 143 to 153 (NKEVKRSNDSE) is flexible linker. Positions 153–198 (EFAREALLQLGYFKNDVDAFIENTDISGLSIEDIMKKAMKSLDSSR) are domain III.

This sequence belongs to the RuvA family. As to quaternary structure, homotetramer. Forms an RuvA(8)-RuvB(12)-Holliday junction (HJ) complex. HJ DNA is sandwiched between 2 RuvA tetramers; dsDNA enters through RuvA and exits via RuvB. An RuvB hexamer assembles on each DNA strand where it exits the tetramer. Each RuvB hexamer is contacted by two RuvA subunits (via domain III) on 2 adjacent RuvB subunits; this complex drives branch migration. In the full resolvosome a probable DNA-RuvA(4)-RuvB(12)-RuvC(2) complex forms which resolves the HJ.

Its subcellular location is the cytoplasm. In terms of biological role, the RuvA-RuvB-RuvC complex processes Holliday junction (HJ) DNA during genetic recombination and DNA repair, while the RuvA-RuvB complex plays an important role in the rescue of blocked DNA replication forks via replication fork reversal (RFR). RuvA specifically binds to HJ cruciform DNA, conferring on it an open structure. The RuvB hexamer acts as an ATP-dependent pump, pulling dsDNA into and through the RuvAB complex. HJ branch migration allows RuvC to scan DNA until it finds its consensus sequence, where it cleaves and resolves the cruciform DNA. The chain is Holliday junction branch migration complex subunit RuvA from Finegoldia magna (strain ATCC 29328 / DSM 20472 / WAL 2508) (Peptostreptococcus magnus).